A 134-amino-acid chain; its full sequence is Large ribosomal subunit protein uL16c (134 aa).

Basic residues predominate over residues 1 to 17 (MLSPKRTRFRKQHRGRM). Residues 1–21 (MLSPKRTRFRKQHRGRMKGIS) form a disordered region.

The protein belongs to the universal ribosomal protein uL16 family. As to quaternary structure, part of the 50S ribosomal subunit.

The protein resides in the plastid. The protein localises to the chloroplast. The sequence is that of Large ribosomal subunit protein uL16c from Solanum bulbocastanum (Wild potato).